The sequence spans 365 residues: Caffeic acid 3-O-methyltransferase (365 aa).

A (E)-ferulate-binding site is contributed by asparagine 133. S-adenosyl-L-homocysteine is bound by residues glycine 210, aspartate 233, aspartate 253, methionine 254, methionine 266, and lysine 267. Catalysis depends on histidine 271, which acts as the Proton acceptor. Aspartate 272 contacts (E)-5-hydroxyferulate.

The protein belongs to the class I-like SAM-binding methyltransferase superfamily. Cation-independent O-methyltransferase family. COMT subfamily. Homodimer.

The catalysed reaction is (E)-caffeate + S-adenosyl-L-methionine = (E)-ferulate + S-adenosyl-L-homocysteine + H(+). It catalyses the reaction (E)-5-hydroxyferulate + S-adenosyl-L-methionine = (E)-sinapate + S-adenosyl-L-homocysteine + H(+). It participates in aromatic compound metabolism; phenylpropanoid biosynthesis. Inhibited by Cu(2+), and to a lesser extent by Ni(2+), Mn(2+), Co(2+), Fe(3+) and Zn(2+). Unaffected by Fe(2+) and Mg(2+). Its function is as follows. Catalyzes the conversion of caffeic acid to ferulic acid and of 5-hydroxyferulic acid to sinapic acid. The resulting products may subsequently be converted to the corresponding alcohols that are incorporated into lignins. This chain is Caffeic acid 3-O-methyltransferase, found in Ammi majus (Bishop's weed).